Here is a 368-residue protein sequence, read N- to C-terminus: Polynucleotide 5'-hydroxyl-kinase NOL9 (368 aa).

Gly-36–Ser-43 is an ATP binding site.

The protein belongs to the Clp1 family. NOL9/GRC3 subfamily.

It localises to the nucleus. The protein localises to the nucleolus. Its function is as follows. Polynucleotide 5'-kinase involved in rRNA processing. In Arabidopsis thaliana (Mouse-ear cress), this protein is Polynucleotide 5'-hydroxyl-kinase NOL9.